Here is a 138-residue protein sequence, read N- to C-terminus: Large ribosomal subunit protein uL16 (138 aa).

Residues 1 to 17 (MLIPRKVKHRKQHHPKQ) are compositionally biased toward basic residues. Residues 1–24 (MLIPRKVKHRKQHHPKQRGIASGG) form a disordered region.

This sequence belongs to the universal ribosomal protein uL16 family. As to quaternary structure, part of the 50S ribosomal subunit.

Functionally, binds 23S rRNA and is also seen to make contacts with the A and possibly P site tRNAs. In Mycolicibacterium vanbaalenii (strain DSM 7251 / JCM 13017 / BCRC 16820 / KCTC 9966 / NRRL B-24157 / PYR-1) (Mycobacterium vanbaalenii), this protein is Large ribosomal subunit protein uL16.